Consider the following 186-residue polypeptide: Putative 5'(3')-deoxyribonucleotidase (186 aa).

D6 acts as the Nucleophile in catalysis. Residues D6, D8, and D137 each coordinate Mg(2+). Residue D8 is the Proton donor of the active site.

The protein belongs to the 5'(3')-deoxyribonucleotidase family. It depends on Mg(2+) as a cofactor.

Its function is as follows. Dephosphorylates the 5' and 2'(3')-phosphates of deoxyribonucleotides. This Bordetella bronchiseptica (strain ATCC BAA-588 / NCTC 13252 / RB50) (Alcaligenes bronchisepticus) protein is Putative 5'(3')-deoxyribonucleotidase.